We begin with the raw amino-acid sequence, 208 residues long: FMN-dependent NADH:quinone oxidoreductase (208 aa).

Residues 17–19 (SNS), 99–102 (MWNL), and 143–146 (SRGG) each bind FMN.

This sequence belongs to the azoreductase type 1 family. Homodimer. FMN serves as cofactor.

It catalyses the reaction 2 a quinone + NADH + H(+) = 2 a 1,4-benzosemiquinone + NAD(+). It carries out the reaction N,N-dimethyl-1,4-phenylenediamine + anthranilate + 2 NAD(+) = 2-(4-dimethylaminophenyl)diazenylbenzoate + 2 NADH + 2 H(+). Its function is as follows. Quinone reductase that provides resistance to thiol-specific stress caused by electrophilic quinones. In terms of biological role, also exhibits azoreductase activity. Catalyzes the reductive cleavage of the azo bond in aromatic azo compounds to the corresponding amines. The chain is FMN-dependent NADH:quinone oxidoreductase from Staphylococcus aureus (strain Mu50 / ATCC 700699).